Here is a 65-residue protein sequence, read N- to C-terminus: uncharacterized protein (65 aa).

This is an uncharacterized protein from Bacillus subtilis (strain 168).